The chain runs to 768 residues: Solute carrier family 45 member 4 (768 aa).

The tract at residues 1 to 32 (MKMAPQNADPESMQVQELSVPLPDPQKAGGAE) is disordered. 6 helical membrane-spanning segments follow: residues 63–83 (EFCYAMETALVTPILLQIGLP), 86–106 (YYSLTWFLSPILGLIFTPLIG), 123–143 (ILALCVGVLFGVALFLNGSAI), 155–175 (PIGIVLTVLGVVVLDFSADAT), 196–216 (LNIHAFSAGLGGAIGYVLGGL), and 233–253 (VLFFFAAIIFTVSVALHLFSI). Disordered stretches follow at residues 259–284 (SPQQERSAEEPGALDGGEPHGVPAFP) and 379–419 (NEAK…RHAF). Residues serine 424 and serine 454 each carry the phosphoserine modification. The tract at residues 460–489 (DMQKRQRQHRHRNQSGATTSSGDTESEEGE) is disordered. The segment covering 473–482 (QSGATTSSGD) has biased composition (low complexity). Phosphoserine is present on serine 485. 6 consecutive transmembrane segments (helical) span residues 518–538 (TWFSVIAEAVFYTDFMGQVIF), 560–580 (MGCWGLVIYAATGAICSALLQ), 592–612 (VIYVLGTLGFSVGTAVMAMFP), 614–634 (VYVAMVTISTMGIVSMSISYC), 666–686 (ILSCQVYISQILVASALGGVV), and 695–715 (IPMVASVGSFLGFLTATFLVI). The disordered stretch occupies residues 726–768 (EQKGLSSPLAGEGRAGGNSEKPTVLKLTRKEGLQGPVETESVV). Position 732 is a phosphoserine (serine 732).

It belongs to the glycoside-pentoside-hexuronide (GPH) cation symporter transporter (TC 2.A.2) family.

The protein resides in the membrane. The enzyme catalyses sucrose(out) + H(+)(out) = sucrose(in) + H(+)(in). Proton-associated sucrose transporter. May be able to transport also glucose and fructose. This Homo sapiens (Human) protein is Solute carrier family 45 member 4.